Consider the following 70-residue polypeptide: DNA gyrase inhibitor YacG (70 aa).

Zn(2+) is bound by residues Cys7, Cys10, Cys26, and Cys30.

It belongs to the DNA gyrase inhibitor YacG family. Interacts with GyrB. Zn(2+) serves as cofactor.

Functionally, inhibits all the catalytic activities of DNA gyrase by preventing its interaction with DNA. Acts by binding directly to the C-terminal domain of GyrB, which probably disrupts DNA binding by the gyrase. The protein is DNA gyrase inhibitor YacG of Shewanella sediminis (strain HAW-EB3).